The chain runs to 1149 residues: ATP-dependent helicase/deoxyribonuclease subunit B (1149 aa).

In terms of domain architecture, UvrD-like helicase ATP-binding spans 1-276 (MAIRYIFGRA…INLDIEERKV (276 aa)). Residue 8–15 (GRAGRGKS) participates in ATP binding. The UvrD-like helicase C-terminal domain maps to 273-586 (ERKVLPKEKE…LVGSIERSKS (314 aa)). Residues cysteine 786, cysteine 1105, cysteine 1108, and cysteine 1114 each contribute to the [4Fe-4S] cluster site.

This sequence belongs to the helicase family. AddB/RexB type 1 subfamily. As to quaternary structure, heterodimer of AddA and AddB. Requires Mg(2+) as cofactor. It depends on [4Fe-4S] cluster as a cofactor.

The heterodimer acts as both an ATP-dependent DNA helicase and an ATP-dependent, dual-direction single-stranded exonuclease. Recognizes the chi site generating a DNA molecule suitable for the initiation of homologous recombination. The AddB subunit has 5' -&gt; 3' nuclease activity but not helicase activity. The protein is ATP-dependent helicase/deoxyribonuclease subunit B of Alkaliphilus metalliredigens (strain QYMF).